Reading from the N-terminus, the 354-residue chain is Holliday junction branch migration complex subunit RuvB (354 aa).

The disordered stretch occupies residues 1-22 (MTLQTDDFAPAPARRVVSAAPA). The interval 5 to 194 (TDDFAPAPAR…FGIVARLEFY (190 aa)) is large ATPase domain (RuvB-L). Over residues 9-22 (APAPARRVVSAAPA) the composition is skewed to low complexity. Residues Leu-33, Arg-34, Gly-75, Lys-78, Thr-79, Thr-80, 141 to 143 (EDY), Arg-184, Tyr-194, and Arg-231 each bind ATP. Thr-79 contributes to the Mg(2+) binding site. The small ATPAse domain (RuvB-S) stretch occupies residues 195-265 (SAQELARIVK…IAERALAMLD (71 aa)). The head domain (RuvB-H) stretch occupies residues 268–354 (PEGLDVMDRK…GAQAPGLFAV (87 aa)). Positions 323 and 328 each coordinate DNA.

It belongs to the RuvB family. As to quaternary structure, homohexamer. Forms an RuvA(8)-RuvB(12)-Holliday junction (HJ) complex. HJ DNA is sandwiched between 2 RuvA tetramers; dsDNA enters through RuvA and exits via RuvB. An RuvB hexamer assembles on each DNA strand where it exits the tetramer. Each RuvB hexamer is contacted by two RuvA subunits (via domain III) on 2 adjacent RuvB subunits; this complex drives branch migration. In the full resolvosome a probable DNA-RuvA(4)-RuvB(12)-RuvC(2) complex forms which resolves the HJ.

The protein resides in the cytoplasm. The catalysed reaction is ATP + H2O = ADP + phosphate + H(+). Its function is as follows. The RuvA-RuvB-RuvC complex processes Holliday junction (HJ) DNA during genetic recombination and DNA repair, while the RuvA-RuvB complex plays an important role in the rescue of blocked DNA replication forks via replication fork reversal (RFR). RuvA specifically binds to HJ cruciform DNA, conferring on it an open structure. The RuvB hexamer acts as an ATP-dependent pump, pulling dsDNA into and through the RuvAB complex. RuvB forms 2 homohexamers on either side of HJ DNA bound by 1 or 2 RuvA tetramers; 4 subunits per hexamer contact DNA at a time. Coordinated motions by a converter formed by DNA-disengaged RuvB subunits stimulates ATP hydrolysis and nucleotide exchange. Immobilization of the converter enables RuvB to convert the ATP-contained energy into a lever motion, pulling 2 nucleotides of DNA out of the RuvA tetramer per ATP hydrolyzed, thus driving DNA branch migration. The RuvB motors rotate together with the DNA substrate, which together with the progressing nucleotide cycle form the mechanistic basis for DNA recombination by continuous HJ branch migration. Branch migration allows RuvC to scan DNA until it finds its consensus sequence, where it cleaves and resolves cruciform DNA. This chain is Holliday junction branch migration complex subunit RuvB, found in Verminephrobacter eiseniae (strain EF01-2).